Here is a 376-residue protein sequence, read N- to C-terminus: Chaperone protein DnaJ (376 aa).

The J domain occupies 5 to 70; sequence DYYEVLGVGR…DKKAAYDQFG (66 aa). The CR-type zinc finger occupies 132 to 210; the sequence is GLTKELRIPT…CHGEGRVEKS (79 aa). Zn(2+) contacts are provided by cysteine 145, cysteine 148, cysteine 162, cysteine 165, cysteine 184, cysteine 187, cysteine 198, and cysteine 201. CXXCXGXG motif repeat units follow at residues 145 to 152, 162 to 169, 184 to 191, and 198 to 205; these read CDSCDGSG, CGTCHGQG, CPTCHGRG, and CNKCHGEG.

Belongs to the DnaJ family. As to quaternary structure, homodimer. Zn(2+) is required as a cofactor.

The protein localises to the cytoplasm. In terms of biological role, participates actively in the response to hyperosmotic and heat shock by preventing the aggregation of stress-denatured proteins and by disaggregating proteins, also in an autonomous, DnaK-independent fashion. Unfolded proteins bind initially to DnaJ; upon interaction with the DnaJ-bound protein, DnaK hydrolyzes its bound ATP, resulting in the formation of a stable complex. GrpE releases ADP from DnaK; ATP binding to DnaK triggers the release of the substrate protein, thus completing the reaction cycle. Several rounds of ATP-dependent interactions between DnaJ, DnaK and GrpE are required for fully efficient folding. Also involved, together with DnaK and GrpE, in the DNA replication of plasmids through activation of initiation proteins. The protein is Chaperone protein DnaJ of Shewanella pealeana (strain ATCC 700345 / ANG-SQ1).